The sequence spans 113 residues: UPF0416 protein RF_0879 (113 aa).

It belongs to the UPF0416 family.

The chain is UPF0416 protein RF_0879 from Rickettsia felis (strain ATCC VR-1525 / URRWXCal2) (Rickettsia azadi).